Consider the following 281-residue polypeptide: 2-dehydro-3-deoxyphosphooctonate aldolase (281 aa).

The protein belongs to the KdsA family.

Its subcellular location is the cytoplasm. It catalyses the reaction D-arabinose 5-phosphate + phosphoenolpyruvate + H2O = 3-deoxy-alpha-D-manno-2-octulosonate-8-phosphate + phosphate. Its pathway is carbohydrate biosynthesis; 3-deoxy-D-manno-octulosonate biosynthesis; 3-deoxy-D-manno-octulosonate from D-ribulose 5-phosphate: step 2/3. It participates in bacterial outer membrane biogenesis; lipopolysaccharide biosynthesis. The sequence is that of 2-dehydro-3-deoxyphosphooctonate aldolase from Marinobacter nauticus (strain ATCC 700491 / DSM 11845 / VT8) (Marinobacter aquaeolei).